Consider the following 972-residue polypeptide: MSSSPFTNLGNLDTEAIYENKENEYQTNITNETSNVQNLSSGNDDQQYPNSTNDDANNGLTASQAKLQDIAAVTLFQDNNISTTTLAPPSPSPLRLNEAPRRRGRPRKYPPKPIDEGSEPIIKRKRGRPPKIKSSSPSTKLDDPLKPKRGRGRPRLHPLPVVQPSVDEGTTQNNLQMGLDEPNIIEGFAEGHANLSELKPKRGRGRPRKIKPEEGSSSQNGLSPLVVLPAKRGRGRPPLHRSEQKIANTPISNNVTVESTGTNLHTHSQLNPENEQSSSEFYSLNPQSEIRKEVVVTDQPLFSTADVPVKRKRGRPPLNKPKILFGTSTENKIDENRPKRGRGRPRLERPSGLPLDSKSQSLFKRKRGRPPKIASGIVPLSAFTRKHEDMLHDSDALSLKHFAITSPNNQQFLNNQQRESAPLLPRKRGRPPKKRQENAEIRNITPGLTDSSVHSSSATPQSESSSPNSVSPLLPSSDRLPLLRQSQFTPPPKKPNFEVAIISPKKSQHKLYPNPVVESVFNDVPYSEIDSQLHTIKSTIAARLCGKSHIPLVGHMDEQTKLYQWVRQTIVLGEGNSVIIVGPRGSGKSVLVDDILSRAAQEINEKSYVVRLNGTYQTDDKLALREISRQLSIELESIESDEALKSEMNFSDTLTKLLATLSHPVDLGIAEDVMTTSAAVIFVLEEFDLFVQHSRQMLLYNLFDIAQSRKAPILIIGLTTRYDCSESLEKRVKSRFSHMVIPMRPPSSLSEFEQILKSVLYVSDEGGKDQIITCWNQRVDELLSDTRSHLHKLVQHHYFASRNLKLLYVDLLFPILSMAPDRPLLADEDFANISLKVSDHKVELVKNLSLLELALLICAVRFEARDIPACNFNSAYQEYRQLHQSSVINAAASGALAHSSRLWGRDVALEAWETLGSIGLIIPVHPSTNVSGALSRQCQLWQPEVDINVVSVGLREHRRLPSHYYRWLKEVI.

3 disordered regions span residues 31 to 59 (NETSNVQNLSSGNDDQQYPNSTNDDANNG), 82 to 172 (STTT…GTTQ), and 193 to 223 (ANLSELKPKRGRGRPRKIKPEEGSSSQNGLS). 8 consecutive DNA-binding regions (a.T hook) follow at residues 100–112 (PRRRGRPRKYPPK), 123–135 (KRKRGRPPKIKSS), 148–160 (KRGRGRPRLHPLP), 201–213 (KRGRGRPRKIKPE), 231–243 (KRGRGRPPLHRSE), 310–322 (KRKRGRPPLNKPK), 339–351 (KRGRGRPRLERPS), and 364–376 (KRKRGRPPKIASG). Over residues 147–156 (PKRGRGRPRL) the composition is skewed to basic residues. The segment at 310-374 (KRKRGRPPLN…RKRGRPPKIA (65 aa)) is disordered. The residue at position 405 (Thr-405) is a Phosphothreonine. Ser-406 is subject to Phosphoserine. A compositionally biased stretch (polar residues) spans 408–419 (NNQQFLNNQQRE). A disordered region spans residues 408–477 (NNQQFLNNQQ…NSVSPLLPSS (70 aa)). Positions 425–437 (PRKRGRPPKKRQE) form a DNA-binding region, a.T hook 9. A compositionally biased stretch (low complexity) spans 455–477 (SSSATPQSESSSPNSVSPLLPSS). A Phosphoserine modification is found at Ser-503. Residues 541 to 548 (AARLCGKS) and 582 to 589 (GPRGSGKS) contribute to the ATP site.

The protein belongs to the ORC4 family. In terms of assembly, ORC is composed of six subunits. ORC interacts with cdc18, recruiting it to the ars1 origin of replication.

Its subcellular location is the nucleus. Component of the origin recognition complex (ORC) that binds origins of replication. It has a role in both chromosomal replication and mating type transcriptional silencing. ORC binds to multiple sites within the ars1 origin of DNA replication in an ATP-independent manner. This binding is mediated by the N-terminal A.T hook repeats of orc4. This is Origin recognition complex subunit 4 (orc4) from Schizosaccharomyces pombe (strain 972 / ATCC 24843) (Fission yeast).